A 322-amino-acid polypeptide reads, in one-letter code: Transaldolase (322 aa).

Lysine 136 serves as the catalytic Schiff-base intermediate with substrate.

The protein belongs to the transaldolase family. Type 1 subfamily. In terms of assembly, homodimer.

The protein resides in the cytoplasm. The enzyme catalyses D-sedoheptulose 7-phosphate + D-glyceraldehyde 3-phosphate = D-erythrose 4-phosphate + beta-D-fructose 6-phosphate. Its pathway is carbohydrate degradation; pentose phosphate pathway; D-glyceraldehyde 3-phosphate and beta-D-fructose 6-phosphate from D-ribose 5-phosphate and D-xylulose 5-phosphate (non-oxidative stage): step 2/3. In terms of biological role, transaldolase is important for the balance of metabolites in the pentose-phosphate pathway. In Xanthomonas oryzae pv. oryzae (strain MAFF 311018), this protein is Transaldolase.